The sequence spans 466 residues: Ribulose bisphosphate carboxylase large chain (466 aa).

An N6,N6,N6-trimethyllysine modification is found at lysine 5. Residues asparagine 114 and threonine 164 each coordinate substrate. Lysine 166 serves as the catalytic Proton acceptor. Residue lysine 168 participates in substrate binding. Mg(2+)-binding residues include lysine 192, aspartate 194, and glutamate 195. Residue lysine 192 is modified to N6-carboxylysine. The active-site Proton acceptor is the histidine 285. Positions 286, 318, and 370 each coordinate substrate.

The protein belongs to the RuBisCO large chain family. Type I subfamily. In terms of assembly, heterohexadecamer of 8 large chains and 8 small chains; disulfide-linked. The disulfide link is formed within the large subunit homodimers. It depends on Mg(2+) as a cofactor. In terms of processing, the disulfide bond which can form in the large chain dimeric partners within the hexadecamer appears to be associated with oxidative stress and protein turnover.

The protein localises to the plastid. It localises to the chloroplast. The enzyme catalyses 2 (2R)-3-phosphoglycerate + 2 H(+) = D-ribulose 1,5-bisphosphate + CO2 + H2O. It carries out the reaction D-ribulose 1,5-bisphosphate + O2 = 2-phosphoglycolate + (2R)-3-phosphoglycerate + 2 H(+). In terms of biological role, ruBisCO catalyzes two reactions: the carboxylation of D-ribulose 1,5-bisphosphate, the primary event in carbon dioxide fixation, as well as the oxidative fragmentation of the pentose substrate in the photorespiration process. Both reactions occur simultaneously and in competition at the same active site. This chain is Ribulose bisphosphate carboxylase large chain, found in Drosera binata (Fork-leaved sundew).